The chain runs to 146 residues: Phospholipase A2 OS2 (146 aa).

The signal sequence occupies residues 1–27 (MHPAHLLVLLAVCVSLLGASDIPPLPL). Intrachain disulfides connect Cys38-Cys99, Cys54-Cys145, Cys56-Cys72, Cys71-Cys126, Cys78-Cys119, Cys88-Cys112, and Cys106-Cys117. The Ca(2+) site is built by Tyr55, Gly57, and Gly59. His75 is an active-site residue. Residue Asp76 participates in Ca(2+) binding. The active site involves Asp120.

This sequence belongs to the phospholipase A2 family. Group I subfamily. D49 sub-subfamily. In terms of assembly, monomer. It depends on Ca(2+) as a cofactor. Expressed by the venom gland.

It localises to the secreted. It carries out the reaction a 1,2-diacyl-sn-glycero-3-phosphocholine + H2O = a 1-acyl-sn-glycero-3-phosphocholine + a fatty acid + H(+). Snake venom phospholipase A2 (PLA2) that shows high presynaptic neurotoxicity in vertebrata that is independent of catalytic activity, as well as local myotoxicity when intramuscularly injected into mice. Blocks acetylcholine release in Aplysia neurons, and potentiates pro-inflammatory cellular signaling. Potentiates glutamate excitoxicity when coinjected into brain of rats. May act by binding in a calcium-dependent fashion and with high affinity to a neuronal-type (N-type) PLA2 receptor, and with very high affinity to a muscle-type (M-type) PLA2 receptor. In vitro, shows a high-specific activity on E.coli membranes and is more efficient on the anionic phospholipid POPG than on the anionic phospholipid POPS or the zwitterionic phospholipid POPC. Exerts catalytically-independent anti-HIV (IC(50) is 35 nM) activity and catalytically-dependent antimalarial activity (IC(50) is 3.1 nM when tested on P.falciparum grown in serum that contains lipoproteins). PLA2 catalyzes the calcium-dependent hydrolysis of the 2-acyl groups in 3-sn-phosphoglycerides. This Oxyuranus scutellatus scutellatus (Australian taipan) protein is Phospholipase A2 OS2.